The following is a 492-amino-acid chain: 3-octaprenyl-4-hydroxybenzoate carboxy-lyase (492 aa).

Residue N175 coordinates Mn(2+). Residues 178-180 (IYR), 192-194 (RWL), and 197-198 (RG) each bind prenylated FMN. E241 serves as a coordination point for Mn(2+). The active-site Proton donor is D290.

This sequence belongs to the UbiD family. As to quaternary structure, homohexamer. Prenylated FMN serves as cofactor. It depends on Mn(2+) as a cofactor.

The protein resides in the cell membrane. It catalyses the reaction a 4-hydroxy-3-(all-trans-polyprenyl)benzoate + H(+) = a 2-(all-trans-polyprenyl)phenol + CO2. It functions in the pathway cofactor biosynthesis; ubiquinone biosynthesis. Functionally, catalyzes the decarboxylation of 3-octaprenyl-4-hydroxy benzoate to 2-octaprenylphenol, an intermediate step in ubiquinone biosynthesis. The chain is 3-octaprenyl-4-hydroxybenzoate carboxy-lyase from Salmonella typhi.